We begin with the raw amino-acid sequence, 76 residues long: Small ribosomal subunit protein bS18 (76 aa).

The protein belongs to the bacterial ribosomal protein bS18 family. Part of the 30S ribosomal subunit. Forms a tight heterodimer with protein bS6.

Binds as a heterodimer with protein bS6 to the central domain of the 16S rRNA, where it helps stabilize the platform of the 30S subunit. This is Small ribosomal subunit protein bS18 from Tolumonas auensis (strain DSM 9187 / NBRC 110442 / TA 4).